The primary structure comprises 445 residues: Phosphoglucosamine mutase (445 aa).

S102 (phosphoserine intermediate) is an active-site residue. The Mg(2+) site is built by S102, D241, D243, and D245. S102 carries the post-translational modification Phosphoserine.

It belongs to the phosphohexose mutase family. It depends on Mg(2+) as a cofactor. In terms of processing, activated by phosphorylation.

The enzyme catalyses alpha-D-glucosamine 1-phosphate = D-glucosamine 6-phosphate. Catalyzes the conversion of glucosamine-6-phosphate to glucosamine-1-phosphate. The protein is Phosphoglucosamine mutase of Shigella dysenteriae serotype 1 (strain Sd197).